A 432-amino-acid polypeptide reads, in one-letter code: UDP-N-acetylmuramate--L-alanine ligase (432 aa).

108 to 114 serves as a coordination point for ATP; that stretch reads GAHGKTS.

It belongs to the MurCDEF family.

It is found in the cytoplasm. It carries out the reaction UDP-N-acetyl-alpha-D-muramate + L-alanine + ATP = UDP-N-acetyl-alpha-D-muramoyl-L-alanine + ADP + phosphate + H(+). The protein operates within cell wall biogenesis; peptidoglycan biosynthesis. Functionally, cell wall formation. This chain is UDP-N-acetylmuramate--L-alanine ligase, found in Bacillus pumilus (strain SAFR-032).